We begin with the raw amino-acid sequence, 175 residues long: Co-chaperone protein HscB homolog (175 aa).

Positions 7–79 (SHFELFHLPA…LKRATYLLHL (73 aa)) constitute a J domain.

The protein belongs to the HscB family. In terms of assembly, interacts with HscA and stimulates its ATPase activity.

In terms of biological role, co-chaperone involved in the maturation of iron-sulfur cluster-containing proteins. Seems to help targeting proteins to be folded toward HscA. This chain is Co-chaperone protein HscB homolog, found in Burkholderia thailandensis (strain ATCC 700388 / DSM 13276 / CCUG 48851 / CIP 106301 / E264).